Reading from the N-terminus, the 727-residue chain is Procollagen-lysine,2-oxoglutarate 5-dioxygenase 1 (727 aa).

The first 18 residues, 1–18 (MRPLLLLALLGWLLLAEA), serve as a signal peptide directing secretion. N-linked (GlcNAc...) asparagine glycosylation is found at N163, N197, and N538. Positions 636-727 (QFDLAFVVRY…RYIAVSFVDP (92 aa)) constitute a Fe2OG dioxygenase domain. Residues H656 and D658 each contribute to the Fe cation site. The N-linked (GlcNAc...) asparagine glycan is linked to N686. H708 lines the Fe cation pocket. R718 is a catalytic residue.

As to quaternary structure, homodimer. Identified in a complex with P3H3 and P3H4. Requires Fe(2+) as cofactor. It depends on L-ascorbate as a cofactor.

It is found in the rough endoplasmic reticulum membrane. It catalyses the reaction L-lysyl-[collagen] + 2-oxoglutarate + O2 = (5R)-5-hydroxy-L-lysyl-[collagen] + succinate + CO2. Part of a complex composed of PLOD1, P3H3 and P3H4 that catalyzes hydroxylation of lysine residues in collagen alpha chains and is required for normal assembly and cross-linkling of collagen fibrils. Forms hydroxylysine residues in -Xaa-Lys-Gly- sequences in collagens. These hydroxylysines serve as sites of attachment for carbohydrate units and are essential for the stability of the intermolecular collagen cross-links. This chain is Procollagen-lysine,2-oxoglutarate 5-dioxygenase 1 (PLOD1), found in Homo sapiens (Human).